The sequence spans 632 residues: Phosphatidylinositol-3,5-bisphosphate 3-phosphatase MTMR8 (632 aa).

The Myotubularin phosphatase domain maps to 126 to 500 (GWELISVVND…LHFKFWCGMY (375 aa)). A 1,2-diacyl-sn-glycero-3-phospho-(1D-myo-inositol-3,5-bisphosphate) contacts are provided by Asn250, Asn275, and Ile276. Positions 250, 275, and 276 each coordinate a 1,2-diacyl-sn-glycero-3-phospho-(1D-myo-inositol-3-phosphate). The active-site Phosphocysteine intermediate is Cys338. Residues Ser339, Asp340, Gly341, Trp342, Asp343, Arg344, Lys380, and Arg384 each coordinate a 1,2-diacyl-sn-glycero-3-phospho-(1D-myo-inositol-3,5-bisphosphate). Residues Ser339, Asp340, Gly341, Trp342, Asp343, and Arg344 each coordinate a 1,2-diacyl-sn-glycero-3-phospho-(1D-myo-inositol-3-phosphate). Positions 339 and 340 each coordinate phosphate. Trp342, Asp343, and Arg344 together coordinate phosphate. An a 1,2-diacyl-sn-glycero-3-phospho-(1D-myo-inositol-3-phosphate)-binding site is contributed by Arg384. Residues 545 to 632 (LPDPAGPINT…HSKEEVQESS (88 aa)) form a disordered region. Basic and acidic residues predominate over residues 602 to 632 (EPAANEHDLSSKDKPVFVETEHSKEEVQESS).

This sequence belongs to the protein-tyrosine phosphatase family. Non-receptor class myotubularin subfamily. In terms of assembly, homodimer.

Its subcellular location is the nucleus envelope. It catalyses the reaction a 1,2-diacyl-sn-glycero-3-phospho-(1D-myo-inositol-3,5-bisphosphate) + H2O = a 1,2-diacyl-sn-glycero-3-phospho-(1D-myo-inositol-5-phosphate) + phosphate. The catalysed reaction is a 1,2-diacyl-sn-glycero-3-phospho-(1D-myo-inositol-3-phosphate) + H2O = a 1,2-diacyl-sn-glycero-3-phospho-(1D-myo-inositol) + phosphate. It carries out the reaction 1,2-dioctanoyl-sn-glycero-3-phospho-(1D-myo-inositol-3,5-bisphosphate) + H2O = 1,2-dioctanoyl-sn-glycero-3-phospho-(1D-myo-inositol-5-phosphate) + phosphate. In terms of biological role, lipid phosphatase that specifically dephosphorylates the D-3 position of phosphatidylinositol 3-phosphate and phosphatidylinositol 3,5-bisphosphate, generating phosphatidylinositol and phosphatidylinositol 5-phosphate. The polypeptide is Phosphatidylinositol-3,5-bisphosphate 3-phosphatase MTMR8 (mtmr8) (Danio rerio (Zebrafish)).